The following is a 186-amino-acid chain: Photosystem I assembly protein Ycf4 (186 aa).

A run of 2 helical transmembrane segments spans residues 26 to 46 (WATI…SSYF) and 66 to 86 (IVMT…WLTI).

This sequence belongs to the Ycf4 family.

Its subcellular location is the plastid. It is found in the chloroplast thylakoid membrane. Functionally, seems to be required for the assembly of the photosystem I complex. In Pyropia yezoensis (Susabi-nori), this protein is Photosystem I assembly protein Ycf4.